The chain runs to 209 residues: Somatotropin (209 aa).

A signal peptide spans 1-22 (MGQVFLLMPVLLVAGYLSLGAA). Residue histidine 38 participates in Zn(2+) binding. An intrachain disulfide couples cysteine 71 to cysteine 182. Position 191 (glutamate 191) interacts with Zn(2+). A disulfide bridge connects residues cysteine 199 and cysteine 207.

It belongs to the somatotropin/prolactin family.

It localises to the secreted. Growth hormone plays an important role in growth control and is involved in the regulation of several anabolic processes. Implicated as an osmoregulatory substance important for seawater adaptation. The chain is Somatotropin (gh) from Esox lucius (Northern pike).